The following is a 431-amino-acid chain: Trigger factor (431 aa).

Residues 164–249 enclose the PPIase FKBP-type domain; the sequence is GNIAVIDFKG…IKEIKVKELP (86 aa).

It belongs to the FKBP-type PPIase family. Tig subfamily.

It localises to the cytoplasm. The catalysed reaction is [protein]-peptidylproline (omega=180) = [protein]-peptidylproline (omega=0). Functionally, involved in protein export. Acts as a chaperone by maintaining the newly synthesized protein in an open conformation. Functions as a peptidyl-prolyl cis-trans isomerase. In Clostridium tetani (strain Massachusetts / E88), this protein is Trigger factor.